The chain runs to 271 residues: Elongation factor Ts (271 aa).

Residues 76-79 form an involved in Mg(2+) ion dislocation from EF-Tu region; sequence TDFV.

It belongs to the EF-Ts family.

The protein localises to the cytoplasm. Functionally, associates with the EF-Tu.GDP complex and induces the exchange of GDP to GTP. It remains bound to the aminoacyl-tRNA.EF-Tu.GTP complex up to the GTP hydrolysis stage on the ribosome. In Mycolicibacterium gilvum (strain PYR-GCK) (Mycobacterium gilvum (strain PYR-GCK)), this protein is Elongation factor Ts.